A 237-amino-acid chain; its full sequence is Fibroblast growth factor 3 (237 aa).

Residues 1–21 (MVIIWILLLSFISCGPQVSWA) form the signal peptide. N83 carries N-linked (GlcNAc...) asparagine glycosylation.

Belongs to the heparin-binding growth factors family.

In terms of biological role, plays an important role in the regulation of embryonic development, cell proliferation, and cell differentiation. This is Fibroblast growth factor 3 (fgf3) from Xenopus laevis (African clawed frog).